The sequence spans 305 residues: MQETLLSRAERSVPRLSAALNDYYQLTKPRIQVLLLITTAGAMWIAGKGHVEPLLLLVTLLGGTLAASSANAFNCLIDRDIDLLMERTRRRAIPAGRILPWQAALFATALGVASFAVLAAFANLFAALLAISGIGFYVVIYTLWLKRTTTQNIVIGGAAGAIPPLVGWAAVTGDLGWSAWVLFGIIFMWTPPHFWALAMMIREDYRKAGVPMLPVVAGDEATARQIFIYTLVLVPVTLVLYPLGTMGWIYLLAAGALGLWLIEGAFRLLKAPNDRKESRSLFKRSIFYLMLLFVAMGIDSIFLFA.

9 consecutive transmembrane segments (helical) span residues 31–51 (IQVL…KGHV), 53–73 (PLLL…ANAF), 98–118 (ILPW…FAVL), 124–144 (LFAA…YTLW), 153–173 (IVIG…AVTG), 181–201 (VLFG…AMMI), 221–241 (ATAR…LVLY), 242–262 (PLGT…LWLI), and 285–305 (SIFY…FLFA).

Belongs to the UbiA prenyltransferase family. Protoheme IX farnesyltransferase subfamily.

The protein localises to the cell inner membrane. It carries out the reaction heme b + (2E,6E)-farnesyl diphosphate + H2O = Fe(II)-heme o + diphosphate. It functions in the pathway porphyrin-containing compound metabolism; heme O biosynthesis; heme O from protoheme: step 1/1. Converts heme B (protoheme IX) to heme O by substitution of the vinyl group on carbon 2 of heme B porphyrin ring with a hydroxyethyl farnesyl side group. In Gloeobacter violaceus (strain ATCC 29082 / PCC 7421), this protein is Protoheme IX farnesyltransferase.